The sequence spans 436 residues: GDP-mannose 6-dehydrogenase (436 aa).

Residues Y10, V11, D30, K35, T86, and T124 each coordinate NAD(+). Residues E161, K210, N214, H217, N225, Y256, Y257, R259, F262, and G265 each contribute to the GDP-alpha-D-mannuronate site. C268 serves as the catalytic Nucleophile. K271 is a binding site for NAD(+). The interval 278–295 is inter-domain linker; sequence YRASQLDVEHPMLGSLMR. Residue K324 participates in GDP-alpha-D-mannuronate binding. Position 331 (R331) interacts with NAD(+).

Belongs to the UDP-glucose/GDP-mannose dehydrogenase family. As to quaternary structure, forms a domain-swapped dimer with each peptide contributing to each active site. The dimers assemble further. X-ray structures indicate this enzyme exists as a homotetramer PubMed:12705829, but kinetic and physical results obtained in PubMed:2470755 and PubMed:12135385 indicate that it is probably a homohexamer.

The catalysed reaction is GDP-alpha-D-mannose + 2 NAD(+) + H2O = GDP-alpha-D-mannuronate + 2 NADH + 3 H(+). Its pathway is glycan biosynthesis; alginate biosynthesis. Inhibited by GMP, ATP, GDP-D-glucose and maltose. Inhibited by GMP and deamidoNAD. In terms of biological role, catalyzes the oxidation of guanosine diphospho-D-mannose (GDP-D-mannose) to GDP-D-mannuronic acid, a precursor for alginate polymerization. The alginate layer causes a mucoid phenotype and provides a protective barrier against host immune defenses and antibiotics. Other sugars are not used as substrates. This is GDP-mannose 6-dehydrogenase from Pseudomonas aeruginosa (strain ATCC 15692 / DSM 22644 / CIP 104116 / JCM 14847 / LMG 12228 / 1C / PRS 101 / PAO1).